The chain runs to 363 residues: D-alanine--D-alanine ligase (363 aa).

The ATP-grasp domain occupies 148 to 353; it reads KKLLAAEGLP…YGTLVSTLIE (206 aa). 176–231 is an ATP binding site; the sequence is RERLGLPVFVKPARAGSSIGITKVDDWAALDTAIAAAREHDPKVIVEAGIVGREVE. Residues Asp-308, Glu-320, and Asn-322 each coordinate Mg(2+).

Belongs to the D-alanine--D-alanine ligase family. It depends on Mg(2+) as a cofactor. Requires Mn(2+) as cofactor.

The protein localises to the cytoplasm. The enzyme catalyses 2 D-alanine + ATP = D-alanyl-D-alanine + ADP + phosphate + H(+). It participates in cell wall biogenesis; peptidoglycan biosynthesis. Functionally, cell wall formation. The sequence is that of D-alanine--D-alanine ligase from Nocardia farcinica (strain IFM 10152).